A 637-amino-acid chain; its full sequence is Biosynthetic arginine decarboxylase (637 aa).

Lys101 is subject to N6-(pyridoxal phosphate)lysine. A substrate-binding site is contributed by 286–296; the sequence is FDVGGGLAVDY.

This sequence belongs to the Orn/Lys/Arg decarboxylase class-II family. SpeA subfamily. Requires Mg(2+) as cofactor. It depends on pyridoxal 5'-phosphate as a cofactor.

The catalysed reaction is L-arginine + H(+) = agmatine + CO2. The protein operates within amine and polyamine biosynthesis; agmatine biosynthesis; agmatine from L-arginine: step 1/1. Functionally, catalyzes the biosynthesis of agmatine from arginine. The sequence is that of Biosynthetic arginine decarboxylase from Shewanella baltica (strain OS195).